Consider the following 141-residue polypeptide: Hemoglobin subunit alpha-D (141 aa).

Residues 1-141 (VLTHEDCELL…VGDMLAEKYR (141 aa)) form the Globin domain. The heme b site is built by H58 and H87.

The protein belongs to the globin family. In terms of assembly, there are three forms of hemoglobin in Sphenodon: A, A' and D. Hb A is a tetramer of two alpha-A and two beta-1, Hb A' is a tetramer of two alpha-a and two beta-2, Hb D is a tetramer of two alpha-D and two beta-2. Red blood cells.

Functionally, involved in oxygen transport from the lung to the various peripheral tissues. The sequence is that of Hemoglobin subunit alpha-D (HBAD) from Sphenodon punctatus (Tuatara).